Here is a 104-residue protein sequence, read N- to C-terminus: Pterin-4-alpha-carbinolamine dehydratase (104 aa).

The residue at position 2 (alanine 2) is an N-acetylalanine. Residues aspartate 61–histidine 63 and serine 78–glutamate 81 each bind substrate.

It belongs to the pterin-4-alpha-carbinolamine dehydratase family. In terms of assembly, homotetramer and homodimer. As to expression, the major tissues expressing cDcoH are hypothalamus, kidney and liver.

It localises to the cytoplasm. The protein localises to the nucleus. It carries out the reaction (4aS,6R)-4a-hydroxy-L-erythro-5,6,7,8-tetrahydrobiopterin = (6R)-L-erythro-6,7-dihydrobiopterin + H2O. Functionally, involved in tetrahydrobiopterin biosynthesis. Seems to both prevent the formation of 7-pterins and accelerate the formation of quinonoid-BH2. Coactivator for HNF1A-dependent transcription. Regulates the dimerization of homeodomain protein HNF1A and enhances its transcriptional activity. Also acts as a coactivator for HNF1B-dependent transcription. This chain is Pterin-4-alpha-carbinolamine dehydratase (PCBD1), found in Gallus gallus (Chicken).